The sequence spans 307 residues: Aspartate carbamoyltransferase catalytic subunit (307 aa).

Carbamoyl phosphate is bound by residues Arg54 and Thr55. An L-aspartate-binding site is contributed by Lys83. The carbamoyl phosphate site is built by Arg104, His132, and Gln135. 2 residues coordinate L-aspartate: Arg165 and Arg228. Residues Leu267 and Pro268 each coordinate carbamoyl phosphate.

It belongs to the aspartate/ornithine carbamoyltransferase superfamily. ATCase family. In terms of assembly, heterododecamer (2C3:3R2) of six catalytic PyrB chains organized as two trimers (C3), and six regulatory PyrI chains organized as three dimers (R2).

It catalyses the reaction carbamoyl phosphate + L-aspartate = N-carbamoyl-L-aspartate + phosphate + H(+). The protein operates within pyrimidine metabolism; UMP biosynthesis via de novo pathway; (S)-dihydroorotate from bicarbonate: step 2/3. Functionally, catalyzes the condensation of carbamoyl phosphate and aspartate to form carbamoyl aspartate and inorganic phosphate, the committed step in the de novo pyrimidine nucleotide biosynthesis pathway. The polypeptide is Aspartate carbamoyltransferase catalytic subunit (Clostridium botulinum (strain Loch Maree / Type A3)).